Here is a 35-residue protein sequence, read N- to C-terminus: Potassium channel toxin alpha-KTx 6.12 (35 aa).

Gln1 is modified (pyrrolidone carboxylic acid). Cystine bridges form between Cys4–Cys24, Cys10–Cys29, Cys14–Cys31, and Cys19–Cys34. A Lysine amide modification is found at Lys35.

It belongs to the short scorpion toxin superfamily. Potassium channel inhibitor family. Alpha-KTx 06 subfamily. In terms of assembly, monomer. As to expression, expressed by the venom gland.

Its subcellular location is the secreted. High affinity blocker of Kv1.3/KCNA3 channels of human T cells. Blocks Kv1.2/KCNA2 with an order of magnitude smaller than for Kv1.3/KCNA3. In Anuroctonus phaiodactylus (Mafia scorpion), this protein is Potassium channel toxin alpha-KTx 6.12.